The chain runs to 644 residues: MAHDEFGGLTGWDLEGFHSGGDTEVWKRLGSHVVTIDDDERGPITGTRFAVWAPNAQAVEVISDFNWWTGDRMRLIPGSGVWGTFVEGVDEGTLYKFRIQDQWGTWHEKVDPMARYSEQAPQNASIVTETHYEWNDDEWIARREASRAHAEPMSVYEVHLGGWRHGLSYRELADQLVSYVTWQGYTHVEFMPLAEHPFAPSWGYQVTGYFSPTSRYGSPDDLRYLIDKLHQAGIGVIMDWVPGHFPKDDWALGRFDGTALYEHADPRQGEHKDWGTYIFNYGRNEVKSFLVSSALYWISEFHADGLRVDAVASMLYLDYSREEGQWVPNKYGGRENLEAIDFLRYVNSHLYSRHPGILMIAEESTSFPGVTKPVDDGGLGFGFKWNMGWMNDSLRYLELNPFHRQYHHGEMTFAMVYQYSENFILPISHDEVVHGKGSMITKIPGDDWQQFASLRAFYSYMWSFPGKQLVFMGQEFGQRHEFDESVSLEWFVADLWGHGGLKRLFRDLNKIYKENPALWQLDSDPRGFEWINADDAGNNLFSWLRRSDDGSTIACFTNFSPNPQTDYRIDLPMEGVWTEILNTDSLEYDGTGEFGNLGQIVAAPLPAPDRLRAVATVCVPPMGSVWLRHNPSATAALPGDPGVQ.

Asp-309 (nucleophile) is an active-site residue. Glu-362 functions as the Proton donor in the catalytic mechanism.

This sequence belongs to the glycosyl hydrolase 13 family. GlgB subfamily. In terms of assembly, monomer.

The enzyme catalyses Transfers a segment of a (1-&gt;4)-alpha-D-glucan chain to a primary hydroxy group in a similar glucan chain.. It participates in glycan biosynthesis; glycogen biosynthesis. In terms of biological role, catalyzes the formation of the alpha-1,6-glucosidic linkages in glycogen by scission of a 1,4-alpha-linked oligosaccharide from growing alpha-1,4-glucan chains and the subsequent attachment of the oligosaccharide to the alpha-1,6 position. In Cutibacterium acnes (strain DSM 16379 / KPA171202) (Propionibacterium acnes), this protein is 1,4-alpha-glucan branching enzyme GlgB.